A 150-amino-acid polypeptide reads, in one-letter code: Macrodomain Ter protein (150 aa).

This sequence belongs to the MatP family. As to quaternary structure, homodimer.

It is found in the cytoplasm. Required for spatial organization of the terminus region of the chromosome (Ter macrodomain) during the cell cycle. Prevents early segregation of duplicated Ter macrodomains during cell division. Binds specifically to matS, which is a 13 bp signature motif repeated within the Ter macrodomain. This chain is Macrodomain Ter protein, found in Salmonella agona (strain SL483).